The primary structure comprises 115 residues: Immunoglobulin kappa chain variable 12-41 (115 aa).

An N-terminal signal peptide occupies residues 1 to 20 (MSVLTQVLALLLLWLTGARC). A framework-1 region spans residues 21-43 (DIQMTQSPASLSASVGETVTITC). Cysteines 43 and 108 form a disulfide. The tract at residues 44-54 (RASGNIHNYLA) is complementarity-determining-1. The interval 55-69 (WYQQKQGKSPQLLVY) is framework-2. The tract at residues 70–76 (NAKTLAD) is complementarity-determining-2. The tract at residues 77–108 (GVPSRFSGSGSGTQYSLKINSLQPEDFGSYYC) is framework-3. The interval 109–115 (QHFWSTP) is complementarity-determining-3.

The protein is Immunoglobulin kappa chain variable 12-41 of Mus musculus (Mouse).